Reading from the N-terminus, the 269-residue chain is Expansin-A32 (269 aa).

The first 25 residues, 1 to 25 (MWCTWALGRVVLAVVFLVALAAGDA), serve as a signal peptide directing secretion. The 115-residue stretch at 60-174 (DGACGYKDTS…RRVPCVKVGG (115 aa)) folds into the Expansin-like EG45 domain. The region spanning 184–264 (YFNLVMVSNV…DWQFGVTYQA (81 aa)) is the Expansin-like CBD domain.

The protein belongs to the expansin family. Expansin A subfamily.

Its subcellular location is the secreted. The protein resides in the cell wall. The protein localises to the membrane. Its function is as follows. May cause loosening and extension of plant cell walls by disrupting non-covalent bonding between cellulose microfibrils and matrix glucans. No enzymatic activity has been found. May be required for rapid internodal elongation in deepwater rice during submergence. The sequence is that of Expansin-A32 (EXPA32) from Oryza sativa subsp. japonica (Rice).